A 276-amino-acid polypeptide reads, in one-letter code: uncharacterized protein (276 aa).

Positions 20-137 (PVLIFIPGAN…PPINTFLPDS (118 aa)) constitute an AB hydrolase-1 domain. A disordered region spans residues 57 to 76 (GESELTEPLPDSASNPDSDY).

This sequence belongs to the AB hydrolase superfamily.

This is an uncharacterized protein from Staphylococcus aureus (strain bovine RF122 / ET3-1).